Here is a 160-residue protein sequence, read N- to C-terminus: MPKDVTVESFELDHTIVKAPYVRLISEEVGPKGDIITNFDIRLIQPNENSIDTGGLHTIEHLLAKLIRQRIDGLIDCSPFGCRTGFHMIMWGKQDPTEIAKVIKSSLEAIANEITWEDVPGTTIESCGNYKDHSLHSAKEWAKLILEQGISDQAFERHTV.

Fe cation-binding residues include His57, His61, and Cys127.

Belongs to the LuxS family. Homodimer. Fe cation is required as a cofactor.

It catalyses the reaction S-(5-deoxy-D-ribos-5-yl)-L-homocysteine = (S)-4,5-dihydroxypentane-2,3-dione + L-homocysteine. Functionally, involved in the synthesis of autoinducer 2 (AI-2) which is secreted by bacteria and is used to communicate both the cell density and the metabolic potential of the environment. The regulation of gene expression in response to changes in cell density is called quorum sensing. Catalyzes the transformation of S-ribosylhomocysteine (RHC) to homocysteine (HC) and 4,5-dihydroxy-2,3-pentadione (DPD). This Streptococcus thermophilus (strain CNRZ 1066) protein is S-ribosylhomocysteine lyase.